We begin with the raw amino-acid sequence, 663 residues long: Transcriptional repressor CTCFL (663 aa).

Over residues 24-51 (EKGLKEEEKDGVCREKDHRSPSELEAER) the composition is skewed to basic and acidic residues. Disordered stretches follow at residues 24–55 (EKGLKEEEKDGVCREKDHRSPSELEAERTSGA) and 221–250 (NSNVEEQEDQPTAGQADAEKAKSTKNQRKT). 10 consecutive C2H2-type zinc fingers follow at residues 257–279 (FHCDVCMFTSSRMSSFNRHMKTH), 285–307 (HLCHLCLKTFRTVTLLRNHVNTH), 313–336 (YKCNDCNMAFVTSGELVRHRRYKH), 342–364 (FKCSMCKYASVEASKLKRHVRSH), 370–392 (FQCCQCSYASRDTYKLKRHMRTH), 398–421 (YECHICHTRFTQSGTMKIHILQKH), 428–451 (YQCPHCATIIARKSDLRVHMRNLH), 458–480 (LKCRYCSAVFHERYALIQHQKTH), 486–508 (FKCKHCSYACKQERHMTAHIRTH), and 514–537 (FTCLSCNKCFRQKQLLNAHFRKYH). A C2H2-type 11; atypical zinc finger spans residues 546–568 (YKCSKCGKGFSRWINLHRHSEKC). A disordered region spans residues 569 to 630 (GSGEAKSAAS…STTKGEQFPG (62 aa)). Residues 580–590 (KGRRTRKRKQT) show a composition bias toward basic residues. Over residues 594–607 (EATKGQKEAAKGWK) the composition is skewed to basic and acidic residues. The span at 608 to 620 (EAANGDEAAAEEA) shows a compositional bias: low complexity.

Belongs to the CTCF zinc-finger protein family. Interacts with histones, PRMT7 and SETD1A. Interacts (via N-terminus) with BAG6/BAT3. In terms of tissue distribution, testis specific. Specifically expressed in primary spermatocytes.

It is found in the cytoplasm. The protein localises to the nucleus. Testis-specific DNA binding protein responsible for insulator function, nuclear architecture and transcriptional control, which probably acts by recruiting epigenetic chromatin modifiers. Plays a key role in gene imprinting in male germline, by participating in the establishment of differential methylation at the IGF2/H19 imprinted control region (ICR). Directly binds the unmethylated H19 ICR and recruits the PRMT7 methyltransferase, leading to methylate histone H4 'Arg-3' to form H4R3sme2. This probably leads to recruit de novo DNA methyltransferases at these sites. Seems to act as tumor suppressor. In association with DNMT1 and DNMT3B, involved in activation of BAG1 gene expression by binding to its promoter. Required for dimethylation of H3 lysine 4 (H3K4me2) of MYC and BRCA1 promoters. The protein is Transcriptional repressor CTCFL (CTCFL) of Homo sapiens (Human).